We begin with the raw amino-acid sequence, 62 residues long: Potassium channel toxin alpha-KTx Tx308 (62 aa).

An N-terminal signal peptide occupies residues 1–18 (MQKLFIVLLLFCILRLDA). Intrachain disulfides connect Cys-28–Cys-46, Cys-33–Cys-59, and Cys-37–Cys-61.

Belongs to the short scorpion toxin superfamily. Potassium channel inhibitor family. Alpha-KTx 23 subfamily. Expressed by the venom gland.

It is found in the secreted. Its function is as follows. May block potassium channels. This chain is Potassium channel toxin alpha-KTx Tx308, found in Buthus israelis (Israeli scorpion).